Consider the following 828-residue polypeptide: Beta-galactosidase (828 aa).

A signal peptide spans 1-20; the sequence is MKMKQFNLLSLFLILITSFG. N-linked (GlcNAc...) asparagine glycans are attached at residues Asn23 and Asn153. Glu183 functions as the Proton donor in the catalytic mechanism. Glu252 (nucleophile) is an active-site residue. 7 N-linked (GlcNAc...) asparagine glycosylation sites follow: Asn253, Asn350, Asn379, Asn492, Asn667, Asn799, and Asn803. Residues 742–828 enclose the SUEL-type lectin domain; that stretch reads AHEHNKVELS…PKRLFVEVEC (87 aa).

It belongs to the glycosyl hydrolase 35 family.

Its subcellular location is the secreted. It is found in the extracellular space. The protein localises to the apoplast. The catalysed reaction is Hydrolysis of terminal non-reducing beta-D-galactose residues in beta-D-galactosides.. This Brassica oleracea (Wild cabbage) protein is Beta-galactosidase.